A 190-amino-acid polypeptide reads, in one-letter code: MKKFLFKQKFCESLPKSFSKTLLALSLGLILLGIFAPFPKVPKQPSVPLMFHFTEHYARFIPTILSVAIPLIQRDAVGLFQVANASIATTLLTHTTKRALNHVTINDQRLGERPYGGNFNMPSGHSSMVGLAVAFLMRRYSFKKYFWLLPLVPLTMLARIYLDMHTIGAVLTGLGVGMLCVSLFTSPKKP.

5 helical membrane-spanning segments follow: residues 22 to 42 (LLAL…PKVP), 60 to 80 (FIPT…VGLF), 117 to 137 (GNFN…AFLM), 145 to 162 (YFWL…RIYL), and 164 to 184 (MHTI…VSLF).

This sequence belongs to the lipid A LpxE 1-phosphatase family. Does not require divalent cations. is required as a cofactor.

The protein resides in the cell inner membrane. It participates in bacterial outer membrane biogenesis; LPS lipid A biosynthesis. In terms of biological role, removes the 1-phosphate group from tetra- and probably hexaacylated lipid A species, has no requirement for the Kdo moiety of lipid A. Has no 4'-phosphatase activity. Has no activity on phospholipids (phosphatidylglycerol, phosphatidylethanolamine or cardiolipin). This enzyme has to act before EptA can attach phosphoethanolamine to the 1-position of lipid A. Absence of the 1-phosphate group renders the bacteria partially resistant to host-derived cationic antimicrobial peptides (CAMP), allowing it to camouflage itself from the host innate immune response, and plays a role in the long-term colonization of the host's stomach. In Helicobacter pylori (strain ATCC 700392 / 26695) (Campylobacter pylori), this protein is Lipid A 1-phosphatase.